The sequence spans 283 residues: Phosphate import ATP-binding protein PstB 1 (283 aa).

Positions 1–16 (MSSDDTTDPTADDESF) are enriched in acidic residues. The interval 1 to 35 (MSSDDTTDPTADDESFTDSPVAGLEQSTTTRGSGR) is disordered. Residues 38-278 (ISARNINVWY…PSSERVENYI (241 aa)) form the ABC transporter domain. Residue 70–77 (GPSGCGKS) participates in ATP binding.

The protein belongs to the ABC transporter superfamily. Phosphate importer (TC 3.A.1.7) family. In terms of assembly, the complex is composed of two ATP-binding proteins (PstB), two transmembrane proteins (PstC and PstA) and a solute-binding protein (PstS).

The protein resides in the cell membrane. The catalysed reaction is phosphate(out) + ATP + H2O = ADP + 2 phosphate(in) + H(+). In terms of biological role, part of the ABC transporter complex PstSACB involved in phosphate import. Responsible for energy coupling to the transport system. The polypeptide is Phosphate import ATP-binding protein PstB 1 (Natronomonas pharaonis (strain ATCC 35678 / DSM 2160 / CIP 103997 / JCM 8858 / NBRC 14720 / NCIMB 2260 / Gabara) (Halobacterium pharaonis)).